Here is a 396-residue protein sequence, read N- to C-terminus: Phospholipase A1-II 4 (396 aa).

Ser-221 serves as the catalytic Acyl-ester intermediate. Residues Ser-221, Asp-282, and His-319 each act as charge relay system in the active site.

The protein belongs to the AB hydrolase superfamily. Lipase family.

The protein resides in the cytoplasm. Acylhydrolase that catalyzes the hydrolysis of phospholipids at the sn-1 position. This chain is Phospholipase A1-II 4, found in Oryza sativa subsp. japonica (Rice).